Reading from the N-terminus, the 258-residue chain is Type III pantothenate kinase (258 aa).

ATP is bound at residue 6-13 (DVGNTQIF). Residue 107–110 (GADR) participates in substrate binding. Asp109 (proton acceptor) is an active-site residue. Asp130 contributes to the K(+) binding site. Residue Thr133 participates in ATP binding. Thr185 provides a ligand contact to substrate.

Belongs to the type III pantothenate kinase family. As to quaternary structure, homodimer. NH4(+) is required as a cofactor. Requires K(+) as cofactor.

The protein resides in the cytoplasm. It catalyses the reaction (R)-pantothenate + ATP = (R)-4'-phosphopantothenate + ADP + H(+). Its pathway is cofactor biosynthesis; coenzyme A biosynthesis; CoA from (R)-pantothenate: step 1/5. Catalyzes the phosphorylation of pantothenate (Pan), the first step in CoA biosynthesis. In Elusimicrobium minutum (strain Pei191), this protein is Type III pantothenate kinase.